Here is a 990-residue protein sequence, read N- to C-terminus: DNA polymerase (990 aa).

The segment at 936–976 (PSDDAARKRARAGPSALRKQKAASNDEDSSDEDDEDCSQAI) is disordered. Residues 960 to 972 (NDEDSSDEDDEDC) are compositionally biased toward acidic residues.

Belongs to the DNA polymerase type-B family.

It catalyses the reaction DNA(n) + a 2'-deoxyribonucleoside 5'-triphosphate = DNA(n+1) + diphosphate. In terms of biological role, replicates the viral genome, host DNA polymerases cannot substitute for the viral enzyme in this process. The polypeptide is DNA polymerase (POL) (Choristoneura fumiferana (Spruce budworm moth)).